A 225-amino-acid chain; its full sequence is Riboflavin kinase (225 aa).

The tract at residues 1–89 is unknown; sequence MPDIKYLKKL…SRIFSPDLDI (89 aa). Residues 90–225 form a riboflavin kinase region; the sequence is LELEGKVLKG…LKKQGTENQK (136 aa). 99 to 104 serves as a coordination point for CDP; that stretch reads GLGEGQ. Mg(2+) is bound by residues Thr128 and Asn130. FMN contacts are provided by Thr185 and Glu193. 198–201 contacts CDP; it reads IKLR.

Belongs to the archaeal riboflavin kinase family. Mg(2+) is required as a cofactor.

It catalyses the reaction riboflavin + CTP = CDP + FMN + H(+). Its pathway is cofactor biosynthesis; FMN biosynthesis; FMN from riboflavin (CTP route): step 1/1. In terms of biological role, catalyzes the CTP-dependent phosphorylation of riboflavin (vitamin B2) to form flavin mononucleotide (FMN). This chain is Riboflavin kinase (ribK), found in Methanosarcina barkeri (strain Fusaro / DSM 804).